The primary structure comprises 241 residues: Urease accessory protein UreF 1 (241 aa).

It belongs to the UreF family. As to quaternary structure, ureD, UreF and UreG form a complex that acts as a GTP-hydrolysis-dependent molecular chaperone, activating the urease apoprotein by helping to assemble the nickel containing metallocenter of UreC. The UreE protein probably delivers the nickel.

Its subcellular location is the cytoplasm. Required for maturation of urease via the functional incorporation of the urease nickel metallocenter. The polypeptide is Urease accessory protein UreF 1 (Brucella melitensis biotype 1 (strain ATCC 23456 / CCUG 17765 / NCTC 10094 / 16M)).